A 284-amino-acid chain; its full sequence is Bifunctional protein FolD (284 aa).

NADP(+) is bound by residues 166-168 (GAS), Ser-191, and Ile-232.

Belongs to the tetrahydrofolate dehydrogenase/cyclohydrolase family. As to quaternary structure, homodimer.

The catalysed reaction is (6R)-5,10-methylene-5,6,7,8-tetrahydrofolate + NADP(+) = (6R)-5,10-methenyltetrahydrofolate + NADPH. It catalyses the reaction (6R)-5,10-methenyltetrahydrofolate + H2O = (6R)-10-formyltetrahydrofolate + H(+). Its pathway is one-carbon metabolism; tetrahydrofolate interconversion. Catalyzes the oxidation of 5,10-methylenetetrahydrofolate to 5,10-methenyltetrahydrofolate and then the hydrolysis of 5,10-methenyltetrahydrofolate to 10-formyltetrahydrofolate. In Neisseria meningitidis serogroup B (strain ATCC BAA-335 / MC58), this protein is Bifunctional protein FolD.